We begin with the raw amino-acid sequence, 391 residues long: Inner membrane protein YdcO (391 aa).

The Cytoplasmic portion of the chain corresponds to 1 to 9; sequence MRLFSIPPP. Residues 10-30 traverse the membrane as a helical segment; it reads TLLAGFLAVLIGYASSAAIIW. Over 31 to 42 the chain is Periplasmic; it reads QAAIVAGATTAQ. A helical membrane pass occupies residues 43–63; that stretch reads ISGWMTALGLAMGVSTLTLTL. Over 64–93 the chain is Cytoplasmic; sequence WYRVPVLTAWSTPGAALLVTGLQGLTLNEA. A helical membrane pass occupies residues 94 to 114; the sequence is IGVFIVTNALIVLCGITGLFA. The Periplasmic segment spans residues 115–123; the sequence is RLMRIIPHS. Residues 124-144 form a helical membrane-spanning segment; that stretch reads LAAAMLAGILLRFGLQAFASL. Residues 145–167 lie on the Cytoplasmic side of the membrane; that stretch reads DGQFTLCGSMLLVWLATKAVAPR. A helical transmembrane segment spans residues 168–188; the sequence is YAVIAAMIIGIVIVIAQGDVV. Over 189–200 the chain is Periplasmic; it reads TTDVVFKPVLPT. Residues 201 to 221 traverse the membrane as a helical segment; that stretch reads YITPDFSFAHSLSVALPLFLV. Over 222-246 the chain is Cytoplasmic; that stretch reads TMASQNAPGIAAMKAAGYSAPVSPL. Residues 247-267 traverse the membrane as a helical segment; that stretch reads IVFTGLLALVFSPFGVYSVGI. Topologically, residues 268-287 are periplasmic; that stretch reads AAITAAICQSPEAHPDKDQR. The helical transmembrane segment at 288 to 308 threads the bilayer; sequence WLAAAVAGIFYLLAGLFGSAI. Over 309 to 311 the chain is Cytoplasmic; it reads TGM. Residues 312–332 traverse the membrane as a helical segment; that stretch reads MAALPVSWIQMLAGLALLSTI. Residues 333-361 lie on the Periplasmic side of the membrane; the sequence is GGSLYQALHNERERDAAVVAFLVTASGLT. Residues 362–382 traverse the membrane as a helical segment; sequence LVGIGSAFWGLIAGGVCYVVL. The Cytoplasmic portion of the chain corresponds to 383–391; that stretch reads NLIADRNRY.

Its subcellular location is the cell inner membrane. The polypeptide is Inner membrane protein YdcO (ydcO) (Escherichia coli (strain K12)).